The following is a 314-amino-acid chain: 4-hydroxy-3-methylbut-2-enyl diphosphate reductase (314 aa).

Cysteine 12 provides a ligand contact to [4Fe-4S] cluster. Residues histidine 41 and histidine 74 each coordinate (2E)-4-hydroxy-3-methylbut-2-enyl diphosphate. Dimethylallyl diphosphate-binding residues include histidine 41 and histidine 74. The isopentenyl diphosphate site is built by histidine 41 and histidine 74. Cysteine 96 provides a ligand contact to [4Fe-4S] cluster. A (2E)-4-hydroxy-3-methylbut-2-enyl diphosphate-binding site is contributed by histidine 124. Histidine 124 is a dimethylallyl diphosphate binding site. Histidine 124 contributes to the isopentenyl diphosphate binding site. The active-site Proton donor is glutamate 126. Threonine 167 lines the (2E)-4-hydroxy-3-methylbut-2-enyl diphosphate pocket. Position 197 (cysteine 197) interacts with [4Fe-4S] cluster. Positions 225, 226, 227, and 269 each coordinate (2E)-4-hydroxy-3-methylbut-2-enyl diphosphate. Residues serine 225, serine 226, asparagine 227, and serine 269 each coordinate dimethylallyl diphosphate. Positions 225, 226, 227, and 269 each coordinate isopentenyl diphosphate.

The protein belongs to the IspH family. [4Fe-4S] cluster is required as a cofactor.

It carries out the reaction isopentenyl diphosphate + 2 oxidized [2Fe-2S]-[ferredoxin] + H2O = (2E)-4-hydroxy-3-methylbut-2-enyl diphosphate + 2 reduced [2Fe-2S]-[ferredoxin] + 2 H(+). The catalysed reaction is dimethylallyl diphosphate + 2 oxidized [2Fe-2S]-[ferredoxin] + H2O = (2E)-4-hydroxy-3-methylbut-2-enyl diphosphate + 2 reduced [2Fe-2S]-[ferredoxin] + 2 H(+). It participates in isoprenoid biosynthesis; dimethylallyl diphosphate biosynthesis; dimethylallyl diphosphate from (2E)-4-hydroxy-3-methylbutenyl diphosphate: step 1/1. The protein operates within isoprenoid biosynthesis; isopentenyl diphosphate biosynthesis via DXP pathway; isopentenyl diphosphate from 1-deoxy-D-xylulose 5-phosphate: step 6/6. Its function is as follows. Catalyzes the conversion of 1-hydroxy-2-methyl-2-(E)-butenyl 4-diphosphate (HMBPP) into a mixture of isopentenyl diphosphate (IPP) and dimethylallyl diphosphate (DMAPP). Acts in the terminal step of the DOXP/MEP pathway for isoprenoid precursor biosynthesis. In Idiomarina loihiensis (strain ATCC BAA-735 / DSM 15497 / L2-TR), this protein is 4-hydroxy-3-methylbut-2-enyl diphosphate reductase.